The following is a 1447-amino-acid chain: DNA topoisomerase 2 (1447 aa).

ATP is bound by residues Asn-72, Asn-101, 129–131 (SSN), and 142–149 (GRNGYGAK). The tract at residues 323-325 (KKK) is interaction with DNA. 357 to 359 (QTK) provides a ligand contact to ATP. The region spanning 435 to 552 (CTLILTEGDS…ELLRLPFLEE (118 aa)) is the Toprim domain. 3 residues coordinate Mg(2+): Glu-441, Asp-521, and Asp-523. The 475-residue stretch at 695-1169 (IPSLVDGLKP…TPEMLWLDDL (475 aa)) folds into the Topo IIA-type catalytic domain. Tyr-785 functions as the O-(5'-phospho-DNA)-tyrosine intermediate in the catalytic mechanism. The interval 972 to 981 (KLTTTLSTNQ) is interaction with DNA. Disordered stretches follow at residues 1079 to 1110 (EDAEQADEEDEEEEEAAPSVSSKAKKEKEVDP), 1183 to 1231 (ERAE…DGEP), and 1246 to 1447 (AAAK…DFNC). The segment covering 1081–1094 (AEQADEEDEEEEEA) has biased composition (acidic residues). Positions 1255-1281 (KEPKKPKEPKEPKVKKEPKGKQIKAEP) are enriched in basic and acidic residues. Acidic residues predominate over residues 1283-1293 (ASGDEVDEFDA). Position 1284 is a phosphoserine (Ser-1284). Composition is skewed to basic and acidic residues over residues 1310–1325 (VKKEPGEKKPRQKKEN) and 1332–1359 (SKIDFSKAKAKKSDDDVEEVTPRAERPG). Ser-1344 carries the phosphoserine modification. Position 1352 is a phosphothreonine (Thr-1352). Phosphoserine is present on residues Ser-1374, Ser-1385, Ser-1392, and Ser-1396. Positions 1374–1394 (SDEEEDGGNVGSDDDGNASDD) are enriched in acidic residues. Residues 1395-1408 (DSPKRPAKRGREDE) show a composition bias toward basic and acidic residues. Residues 1413–1423 (AKKKAPPKKRR) show a composition bias toward basic residues. Residues 1427-1447 (ESDDDDIEIDEDDDDDSDFNC) show a composition bias toward acidic residues.

Belongs to the type II topoisomerase family. Homodimer. Interacts with mod(mdg4). Interacts with barr. Interacts with ph-p. Interacts with mle; the interaction mediates association with the MSL dosage compensation complex. Requires Mg(2+) as cofactor. It depends on Mn(2+) as a cofactor. The cofactor is Ca(2+). Phosphorylated. Phosphorylation by casein kinase II enhances ATPase activity.

It is found in the nucleus. The protein localises to the chromosome. The protein resides in the cytoplasm. It carries out the reaction ATP-dependent breakage, passage and rejoining of double-stranded DNA.. Its function is as follows. Control of topological states of DNA by transient breakage and subsequent rejoining of DNA strands. Topoisomerase II makes double-strand breaks. Essential during mitosis and meiosis for proper segregation of daughter chromosomes. During meiosis, it disrupts heterochromatic connections between achiasmate and chiasmate homologs after spindle assembly so that chromosomes can separate at prometaphase I. During mitosis, it functions in the separation of sister chromatids by establishing amphitelic kinetochore attachments in mitotic spindles. May have a role in chromatin condensation and chromosome structure. May be involved in X-chromosome dosage compensation, perhaps by modifying the topological state of compensated genes. Regulates activity of the gypsy chromatin insulator complex by binding to mod(mdg4) and preventing its degradation. The chain is DNA topoisomerase 2 from Drosophila melanogaster (Fruit fly).